We begin with the raw amino-acid sequence, 218 residues long: Thiopurine S-methyltransferase (218 aa).

S-adenosyl-L-methionine-binding residues include W10, L45, E66, and R123.

Belongs to the class I-like SAM-binding methyltransferase superfamily. TPMT family.

It is found in the cytoplasm. The catalysed reaction is S-adenosyl-L-methionine + a thiopurine = S-adenosyl-L-homocysteine + a thiopurine S-methylether.. In Shewanella amazonensis (strain ATCC BAA-1098 / SB2B), this protein is Thiopurine S-methyltransferase.